The following is a 174-amino-acid chain: Bacterial proteasome activator (174 aa).

The segment at 153–174 (QGALPPGVGKSGQHGHGTGQYL) is disordered. Over residues 161–174 (GKSGQHGHGTGQYL) the composition is skewed to gly residues. The short motif at 172-174 (QYL) is the HbYX motif element.

Belongs to the Bpa family. As to quaternary structure, forms a homooligomeric, either hexameric or heptameric, ring-like structure which stacks co-axially with the proteasomal alpha-rings.

Functionally, interacts with the core proteasome alpha-subunit (PrcA) through its C-terminal hydrophobic-tyrosine-X motif (HbYX motif). Interaction of Bpa with the proteasome stimulates proteasomal peptidase and casein degradation activity, which suggests Bpa could play a role in the removal of non-native or damaged proteins by influencing the conformation of the proteasome complex upon interaction. The chain is Bacterial proteasome activator (bpa) from Mycobacterium bovis (strain ATCC BAA-935 / AF2122/97).